We begin with the raw amino-acid sequence, 318 residues long: Mitochondrial thiamine pyrophosphate carrier (318 aa).

3 Solcar repeats span residues 13-106 (NSKL…LTEL), 116-202 (HQFS…LKRA), and 214-309 (TGNL…FCNL). The next 5 membrane-spanning stretches (helical) occupy residues 19 to 39 (AVAGSVSGFVTRALISPLDVI), 87 to 107 (ILSIGYGAVQFLAFEELTELL), 122 to 142 (FVCGGLSAGTATLTVHPVDVL), 173 to 193 (VFYKGLTPTVIAIFPYAGLQF), and 220 to 240 (LLCGCGSGVISKTFTYPLDLI). Residues 241–246 (KKRLQV) carry the Substrate recognition motif. The chain crosses the membrane as a helical span at residues 293–313 (ALSTGFMFFWYELFCNLFHCI).

It belongs to the mitochondrial carrier (TC 2.A.29) family.

Its subcellular location is the mitochondrion membrane. It carries out the reaction thiamine phosphate(out) + thiamine diphosphate(in) = thiamine phosphate(in) + thiamine diphosphate(out). In terms of biological role, mitochondrial transporter mediating uptake of thiamine diphosphate into mitochondria. It is not clear if the antiporter activity is affected by the membrane potential or by the proton electrochemical gradient. The protein is Mitochondrial thiamine pyrophosphate carrier (Slc25a19) of Mus musculus (Mouse).